A 353-amino-acid polypeptide reads, in one-letter code: Paraneoplastic antigen Ma1 homolog (353 aa).

The protein belongs to the PNMA family. Testis and brain specific.

The protein localises to the nucleus. It localises to the nucleolus. In Rattus norvegicus (Rat), this protein is Paraneoplastic antigen Ma1 homolog (Pnma1).